Consider the following 379-residue polypeptide: Dual-specificity RNA methyltransferase RlmN (379 aa).

The Proton acceptor role is filled by Glu95. Residues 101 to 345 form the Radical SAM core domain; the sequence is EETRGTLCVS…TTVRKTRGDD (245 aa). A disulfide bridge links Cys108 with Cys350. The [4Fe-4S] cluster site is built by Cys115, Cys119, and Cys122. S-adenosyl-L-methionine-binding positions include 176–177, Ser208, 230–232, and Asn307; these read GE and SLH. Cys350 serves as the catalytic S-methylcysteine intermediate.

The protein belongs to the radical SAM superfamily. RlmN family. It depends on [4Fe-4S] cluster as a cofactor.

The protein resides in the cytoplasm. It carries out the reaction adenosine(2503) in 23S rRNA + 2 reduced [2Fe-2S]-[ferredoxin] + 2 S-adenosyl-L-methionine = 2-methyladenosine(2503) in 23S rRNA + 5'-deoxyadenosine + L-methionine + 2 oxidized [2Fe-2S]-[ferredoxin] + S-adenosyl-L-homocysteine. The catalysed reaction is adenosine(37) in tRNA + 2 reduced [2Fe-2S]-[ferredoxin] + 2 S-adenosyl-L-methionine = 2-methyladenosine(37) in tRNA + 5'-deoxyadenosine + L-methionine + 2 oxidized [2Fe-2S]-[ferredoxin] + S-adenosyl-L-homocysteine. Specifically methylates position 2 of adenine 2503 in 23S rRNA and position 2 of adenine 37 in tRNAs. m2A2503 modification seems to play a crucial role in the proofreading step occurring at the peptidyl transferase center and thus would serve to optimize ribosomal fidelity. The chain is Dual-specificity RNA methyltransferase RlmN from Burkholderia cenocepacia (strain HI2424).